A 176-amino-acid chain; its full sequence is NAD(P)H-quinone oxidoreductase subunit 6, chloroplastic (176 aa).

A run of 5 helical transmembrane segments spans residues 10–30 (FLLV…VLLP), 32–52 (PIFS…LYIL), 61–81 (AQLL…VMFM), 92–112 (LWTV…FLLM), and 152–172 (FFLP…GAIS).

This sequence belongs to the complex I subunit 6 family. NDH is composed of at least 16 different subunits, 5 of which are encoded in the nucleus.

The protein resides in the plastid. Its subcellular location is the chloroplast thylakoid membrane. It catalyses the reaction a plastoquinone + NADH + (n+1) H(+)(in) = a plastoquinol + NAD(+) + n H(+)(out). The enzyme catalyses a plastoquinone + NADPH + (n+1) H(+)(in) = a plastoquinol + NADP(+) + n H(+)(out). Functionally, NDH shuttles electrons from NAD(P)H:plastoquinone, via FMN and iron-sulfur (Fe-S) centers, to quinones in the photosynthetic chain and possibly in a chloroplast respiratory chain. The immediate electron acceptor for the enzyme in this species is believed to be plastoquinone. Couples the redox reaction to proton translocation, and thus conserves the redox energy in a proton gradient. This Olimarabidopsis pumila (Dwarf rocket) protein is NAD(P)H-quinone oxidoreductase subunit 6, chloroplastic (ndhG).